A 230-amino-acid polypeptide reads, in one-letter code: MKLCIALDNPSKEENLKLAKELKEYAKELWLKVGFRSYIRDGAEFIKELKLMGYNVFLDLKLYDIPNTMADAAEEIANLGVDMFNVHASAGSIALKTVMQRLEKYEKRPLVLAVTALTSFTDEEFKKIYGDSIENKAKEFAKLSHEAGLDGVVCSAFESKMIKNITDEKFITLTPGIRPFGEDAGDQARVADISLAKEQKVDFIVVGRPIYKDEDPKAKVEKILNKIKEI.

Substrate-binding positions include D8, K32, 59-68 (DLKLYDIPNT), T118, R178, Q187, G207, and R208. K61 (proton donor) is an active-site residue.

This sequence belongs to the OMP decarboxylase family. Type 1 subfamily. Homodimer.

It catalyses the reaction orotidine 5'-phosphate + H(+) = UMP + CO2. Its pathway is pyrimidine metabolism; UMP biosynthesis via de novo pathway; UMP from orotate: step 2/2. Its function is as follows. Catalyzes the decarboxylation of orotidine 5'-monophosphate (OMP) to uridine 5'-monophosphate (UMP). The chain is Orotidine 5'-phosphate decarboxylase from Nautilia profundicola (strain ATCC BAA-1463 / DSM 18972 / AmH).